Here is a 155-residue protein sequence, read N- to C-terminus: Nodulin-related protein 2 (155 aa).

M1 is subject to N-acetylmethionine. Disordered stretches follow at residues 1 to 37 (MNFI…PATN) and 85 to 155 (DEKS…GFLK). Residues 95–106 (DKAEKYLNDYES) show a composition bias toward basic and acidic residues. A compositionally biased stretch (low complexity) spans 120–130 (SQAEPASQPEP).

Interacts with DEK3.

Functionally, may be a negative regulator of the ABA signaling/synthesis pathway. The polypeptide is Nodulin-related protein 2 (Arabidopsis thaliana (Mouse-ear cress)).